Here is a 314-residue protein sequence, read N- to C-terminus: 4-hydroxy-3-methylbut-2-enyl diphosphate reductase (314 aa).

Cys-12 lines the [4Fe-4S] cluster pocket. The (2E)-4-hydroxy-3-methylbut-2-enyl diphosphate site is built by His-41 and His-74. Dimethylallyl diphosphate contacts are provided by His-41 and His-74. Residues His-41 and His-74 each contribute to the isopentenyl diphosphate site. Cys-96 serves as a coordination point for [4Fe-4S] cluster. Residue His-124 coordinates (2E)-4-hydroxy-3-methylbut-2-enyl diphosphate. His-124 is a dimethylallyl diphosphate binding site. His-124 is an isopentenyl diphosphate binding site. The active-site Proton donor is Glu-126. Thr-167 contacts (2E)-4-hydroxy-3-methylbut-2-enyl diphosphate. Cys-197 is a binding site for [4Fe-4S] cluster. (2E)-4-hydroxy-3-methylbut-2-enyl diphosphate-binding residues include Ser-225, Ser-226, Asn-227, and Ser-269. The dimethylallyl diphosphate site is built by Ser-225, Ser-226, Asn-227, and Ser-269. Residues Ser-225, Ser-226, Asn-227, and Ser-269 each coordinate isopentenyl diphosphate.

This sequence belongs to the IspH family. Requires [4Fe-4S] cluster as cofactor.

It catalyses the reaction isopentenyl diphosphate + 2 oxidized [2Fe-2S]-[ferredoxin] + H2O = (2E)-4-hydroxy-3-methylbut-2-enyl diphosphate + 2 reduced [2Fe-2S]-[ferredoxin] + 2 H(+). The catalysed reaction is dimethylallyl diphosphate + 2 oxidized [2Fe-2S]-[ferredoxin] + H2O = (2E)-4-hydroxy-3-methylbut-2-enyl diphosphate + 2 reduced [2Fe-2S]-[ferredoxin] + 2 H(+). It functions in the pathway isoprenoid biosynthesis; dimethylallyl diphosphate biosynthesis; dimethylallyl diphosphate from (2E)-4-hydroxy-3-methylbutenyl diphosphate: step 1/1. It participates in isoprenoid biosynthesis; isopentenyl diphosphate biosynthesis via DXP pathway; isopentenyl diphosphate from 1-deoxy-D-xylulose 5-phosphate: step 6/6. Catalyzes the conversion of 1-hydroxy-2-methyl-2-(E)-butenyl 4-diphosphate (HMBPP) into a mixture of isopentenyl diphosphate (IPP) and dimethylallyl diphosphate (DMAPP). Acts in the terminal step of the DOXP/MEP pathway for isoprenoid precursor biosynthesis. The sequence is that of 4-hydroxy-3-methylbut-2-enyl diphosphate reductase from Haemophilus influenzae (strain PittEE).